The primary structure comprises 410 residues: 3-phosphoshikimate 1-carboxyvinyltransferase (410 aa).

Residues K21, S22, and R26 each coordinate 3-phosphoshikimate. K21 is a binding site for phosphoenolpyruvate. Phosphoenolpyruvate contacts are provided by G69 and R97. The 3-phosphoshikimate site is built by S143, S144, Q145, S171, D288, and K315. Q145 contributes to the phosphoenolpyruvate binding site. Residue D288 is the Proton acceptor of the active site. The phosphoenolpyruvate site is built by R319, R364, and K389.

The protein belongs to the EPSP synthase family. In terms of assembly, monomer.

Its subcellular location is the cytoplasm. It catalyses the reaction 3-phosphoshikimate + phosphoenolpyruvate = 5-O-(1-carboxyvinyl)-3-phosphoshikimate + phosphate. Its pathway is metabolic intermediate biosynthesis; chorismate biosynthesis; chorismate from D-erythrose 4-phosphate and phosphoenolpyruvate: step 6/7. Catalyzes the transfer of the enolpyruvyl moiety of phosphoenolpyruvate (PEP) to the 5-hydroxyl of shikimate-3-phosphate (S3P) to produce enolpyruvyl shikimate-3-phosphate and inorganic phosphate. This is 3-phosphoshikimate 1-carboxyvinyltransferase from Bacteroides fragilis (strain ATCC 25285 / DSM 2151 / CCUG 4856 / JCM 11019 / LMG 10263 / NCTC 9343 / Onslow / VPI 2553 / EN-2).